The primary structure comprises 466 residues: 3-isopropylmalate dehydratase large subunit (466 aa).

Residues cysteine 347, cysteine 407, and cysteine 410 each coordinate [4Fe-4S] cluster.

It belongs to the aconitase/IPM isomerase family. LeuC type 1 subfamily. As to quaternary structure, heterodimer of LeuC and LeuD. It depends on [4Fe-4S] cluster as a cofactor.

It catalyses the reaction (2R,3S)-3-isopropylmalate = (2S)-2-isopropylmalate. The protein operates within amino-acid biosynthesis; L-leucine biosynthesis; L-leucine from 3-methyl-2-oxobutanoate: step 2/4. Functionally, catalyzes the isomerization between 2-isopropylmalate and 3-isopropylmalate, via the formation of 2-isopropylmaleate. The sequence is that of 3-isopropylmalate dehydratase large subunit from Citrobacter koseri (strain ATCC BAA-895 / CDC 4225-83 / SGSC4696).